Here is a 600-residue protein sequence, read N- to C-terminus: Single-strand DNA endonuclease 1 (600 aa).

Residues 1-97 are N-domain; the sequence is MGVKYLWDVL…KRRLKARFEI (97 aa). The tract at residues 2–97 is XPG-N domain; that stretch reads GVKYLWDVLE…KRRLKARFEI (96 aa). The Mg(2+) site is built by Asp30, Asp76, Glu142, Glu144, Asp163, Asp165, and Asp215. Positions 130-215 are XPG-I domain; it reads STLGILCLDG…IALALLLGSD (86 aa). I-domain regions lie at residues 130–218 and 130–219; these read STLG…DYSQ and STLG…YSQG. Positions 215–353 are 5'-3' exonuclease domain; it reads DYSQGVRGLR…ILPKVAERNL (139 aa). Positions 433 to 458 are disordered; the sequence is MAAKKKKPKPKQKQKETSSPTKSSSL. Residues 435-444 are compositionally biased toward basic residues; the sequence is AKKKKPKPKQ.

Belongs to the XPG/RAD2 endonuclease family. GEN subfamily. Mg(2+) is required as a cofactor.

Its subcellular location is the nucleus. Functionally, endonuclease which cleaves flap structures at the junction between single-stranded DNA and double-stranded DNA with a specific cleavage site in the 5' overhang strand exactly one nucleotide 3' of the branch point. Structure- and sequence-specific nuclease that resolves holliday junctions (HJs) by symmetrically oriented incisions in two opposing strands near the junction point, thus leading to ligatable products; HJs are physical links between homologous DNA molecules that arise as central intermediary structures during homologous recombination and repair in meiotic and somatic cells. Structure-specific nuclease with 5'-flap endonuclease activity, preferentially cleaving static flaps 5' overhang strand exactly one nucleotide in the 3' direction of the branch point and, to lower extent, on the two neighboring positions. Also able to cleave double-stranded flap strand 1 one nucleotide in the 3' direction of the branch point. Together with MUS81, essential for the resolution of toxic replication structures to ensure genome stability, and to maintain telomere integrity and replication. This is Single-strand DNA endonuclease 1 from Arabidopsis thaliana (Mouse-ear cress).